The sequence spans 150 residues: MEKSFVMLKPDAVKRRLAGRIIARFEDRGLKIVAFKMLQIPEDLAMEHYQEHREKPFFRDLVDYITSAPVIAMVIEGKDCISLIRKMVGATNPAEADLGTIRGDFALETGRNIIHASDSPESAEREIKLFFDESEICSYEMPDREMIYEE.

Residues Lys9, Phe57, Arg85, Thr91, Arg102, and Asn112 each coordinate ATP. His115 serves as the catalytic Pros-phosphohistidine intermediate.

This sequence belongs to the NDK family. Mg(2+) is required as a cofactor.

It is found in the cytoplasm. The enzyme catalyses a 2'-deoxyribonucleoside 5'-diphosphate + ATP = a 2'-deoxyribonucleoside 5'-triphosphate + ADP. It carries out the reaction a ribonucleoside 5'-diphosphate + ATP = a ribonucleoside 5'-triphosphate + ADP. Functionally, major role in the synthesis of nucleoside triphosphates other than ATP. The ATP gamma phosphate is transferred to the NDP beta phosphate via a ping-pong mechanism, using a phosphorylated active-site intermediate. The sequence is that of Nucleoside diphosphate kinase from Methanothermobacter thermautotrophicus (strain ATCC 29096 / DSM 1053 / JCM 10044 / NBRC 100330 / Delta H) (Methanobacterium thermoautotrophicum).